A 136-amino-acid polypeptide reads, in one-letter code: MIPGEIITKSTEVEINNHHPETVIEVENTGDRPIQVGSHFHFYEANAALDFEREMAYGKHLDIPAGAAVRFEPGDKKEVQLVEYAGKRKIFGFRGMVNGPIDESRVYRPTDENDAYAGVFGDNGAENVNKKGGKRS.

The protein belongs to the urease beta subunit family. Heterotrimer of UreA (gamma), UreB (beta) and UreC (alpha) subunits. Three heterotrimers associate to form the active enzyme.

Its subcellular location is the cytoplasm. The enzyme catalyses urea + 2 H2O + H(+) = hydrogencarbonate + 2 NH4(+). The protein operates within nitrogen metabolism; urea degradation; CO(2) and NH(3) from urea (urease route): step 1/1. The chain is Urease subunit beta from Staphylococcus aureus (strain Mu3 / ATCC 700698).